The primary structure comprises 724 residues: ATPase family protein 2 homolog (724 aa).

ATP is bound by residues 281-287 (PGSGKTL) and 503-508 (GCSKTL).

This sequence belongs to the AAA ATPase family. AFG2 subfamily. Homohexamer; ATP binding induces oligomerization. Forms a ring-shaped particle of about 12 nm diameter, that displays 6-fold radial symmetry. Interacts (via N-terminus) with kinase air-2; the interaction is direct and inhibits air-2 kinase activity in an ATPase-dependent manner.

The protein localises to the cytoplasm. The enzyme catalyses ATP + H2O = ADP + phosphate + H(+). Its function is as follows. ATP-dependent chaperone which uses the energy provided by ATP hydrolysis to generate mechanical force to disassemble protein complexes. Required for various steps of embryonic mitosis including centrosome duplication, spindle assembly, ER dynamics and cell cycle progression. Regulates the stability and activity of kinase air-2, a component of the chromosomal passenger complex (CPC). Inhibits air-2 kinase activity from metaphase to late telophase and negatively regulates air-2 stability during mitotic exit. Controls ER transition into sheet-like structures at the onset of mitosis, possibly by regulating homotypic membrane fusion. In Caenorhabditis elegans, this protein is ATPase family protein 2 homolog.